Consider the following 223-residue polypeptide: ATP phosphoribosyltransferase (223 aa).

The protein belongs to the ATP phosphoribosyltransferase family. Short subfamily. As to quaternary structure, heteromultimer composed of HisG and HisZ subunits.

It localises to the cytoplasm. The catalysed reaction is 1-(5-phospho-beta-D-ribosyl)-ATP + diphosphate = 5-phospho-alpha-D-ribose 1-diphosphate + ATP. The protein operates within amino-acid biosynthesis; L-histidine biosynthesis; L-histidine from 5-phospho-alpha-D-ribose 1-diphosphate: step 1/9. In terms of biological role, catalyzes the condensation of ATP and 5-phosphoribose 1-diphosphate to form N'-(5'-phosphoribosyl)-ATP (PR-ATP). Has a crucial role in the pathway because the rate of histidine biosynthesis seems to be controlled primarily by regulation of HisG enzymatic activity. The sequence is that of ATP phosphoribosyltransferase from Bordetella bronchiseptica (strain ATCC BAA-588 / NCTC 13252 / RB50) (Alcaligenes bronchisepticus).